Consider the following 225-residue polypeptide: Biosynthetic peptidoglycan transglycosylase (225 aa).

A helical transmembrane segment spans residues 8–28 (VLLIFIGAILFIQLWIFSSLV).

The protein belongs to the glycosyltransferase 51 family.

Its subcellular location is the cell inner membrane. The catalysed reaction is [GlcNAc-(1-&gt;4)-Mur2Ac(oyl-L-Ala-gamma-D-Glu-L-Lys-D-Ala-D-Ala)](n)-di-trans,octa-cis-undecaprenyl diphosphate + beta-D-GlcNAc-(1-&gt;4)-Mur2Ac(oyl-L-Ala-gamma-D-Glu-L-Lys-D-Ala-D-Ala)-di-trans,octa-cis-undecaprenyl diphosphate = [GlcNAc-(1-&gt;4)-Mur2Ac(oyl-L-Ala-gamma-D-Glu-L-Lys-D-Ala-D-Ala)](n+1)-di-trans,octa-cis-undecaprenyl diphosphate + di-trans,octa-cis-undecaprenyl diphosphate + H(+). It functions in the pathway cell wall biogenesis; peptidoglycan biosynthesis. Its function is as follows. Peptidoglycan polymerase that catalyzes glycan chain elongation from lipid-linked precursors. This Acinetobacter baumannii (strain ATCC 17978 / DSM 105126 / CIP 53.77 / LMG 1025 / NCDC KC755 / 5377) protein is Biosynthetic peptidoglycan transglycosylase.